Reading from the N-terminus, the 517-residue chain is Cytochrome P450 monooxygenase penP (517 aa).

The chain crosses the membrane as a helical span at residues glycine 17 to proline 37. Cysteine 456 contacts heme. Asparagine 501 carries N-linked (GlcNAc...) asparagine glycosylation.

Belongs to the cytochrome P450 family. Heme is required as a cofactor.

The protein localises to the membrane. It participates in secondary metabolite biosynthesis. Its function is as follows. Cytochrome P450 monooxygenase; part of the gene cluster that mediates the biosynthesis of the indole diterpenes penitrems. The geranylgeranyl diphosphate (GGPP) synthase penG catalyzes the first step in penitrem biosynthesis via conversion of farnesyl pyrophosphate and isopentyl pyrophosphate into geranylgeranyl pyrophosphate (GGPP). Condensation of indole-3-glycerol phosphate with GGPP by the prenyl transferase penC then forms 3-geranylgeranylindole (3-GGI). Epoxidation by the FAD-dependent monooxygenase penM leads to a epoxidized-GGI that is substrate of the terpene cyclase penB for cyclization to yield paspaline. Paspaline is subsequently converted to 13-desoxypaxilline by the cytochrome P450 monooxygenase penP, the latter being then converted to paxilline by the cytochrome P450 monooxygenase penQ. Paxilline is converted to beta-paxitriol via C-10 ketoreduction by the short-chain dehydrogenase PC-15 which can be monoprenylated at the C-20 by the indole diterpene prenyltransferase penD. A two-step elimination (acetylation and elimination) process performed by the O-acetyltransferase PC-16 and the P.simplicissimum ptmI-ortholog not yet identified in P.crustosum, leads to the production of the prenylated form of penijanthine. The FAD-linked oxidoreductase ptmO then converts the prenylated form of penijanthine into PC-M5 which is in turn transformed into PC-M4 by the aromatic dimethylallyltransferase PC-22. A series of oxidation steps involving 4 cytochrome P450 monooxygenases (PC-21, PC-05, PC-23, PC-20) and a FAD-dependent monooxygenase (PC-14) are required for the transformation of PC-M4 to penitrems A and E. Synthesis of these final products is proposed to proceed via penitrems D and C (PC-21, PC-05, PC-14) and penitrems B and F (PC-21, PC-05, PC-14, PC-23). The sequence is that of Cytochrome P450 monooxygenase penP from Penicillium crustosum (Blue mold fungus).